The primary structure comprises 253 residues: Phosphate import ATP-binding protein PstB (253 aa).

An ABC transporter domain is found at Ile5–Ile248. Position 37-44 (Gly37–Ser44) interacts with ATP.

The protein belongs to the ABC transporter superfamily. Phosphate importer (TC 3.A.1.7) family. As to quaternary structure, the complex is composed of two ATP-binding proteins (PstB), two transmembrane proteins (PstC and PstA) and a solute-binding protein (PstS).

It localises to the cell inner membrane. The enzyme catalyses phosphate(out) + ATP + H2O = ADP + 2 phosphate(in) + H(+). Its function is as follows. Part of the ABC transporter complex PstSACB involved in phosphate import. Responsible for energy coupling to the transport system. The polypeptide is Phosphate import ATP-binding protein PstB (Koribacter versatilis (strain Ellin345)).